Here is a 384-residue protein sequence, read N- to C-terminus: Probable L-tyrosine/L-aspartate decarboxylase (384 aa).

An N6-(pyridoxal phosphate)lysine modification is found at Lys233.

The protein belongs to the group II decarboxylase family. MfnA subfamily. Requires pyridoxal 5'-phosphate as cofactor.

The enzyme catalyses L-tyrosine + H(+) = tyramine + CO2. It carries out the reaction L-aspartate + H(+) = beta-alanine + CO2. It participates in cofactor biosynthesis; methanofuran biosynthesis. The protein operates within cofactor biosynthesis; coenzyme A biosynthesis. Functionally, catalyzes the decarboxylation of L-tyrosine to produce tyramine for methanofuran biosynthesis. Can also catalyze the decarboxylation of L-aspartate to produce beta-alanine for coenzyme A (CoA) biosynthesis. The sequence is that of Probable L-tyrosine/L-aspartate decarboxylase from Methanococcus maripaludis (strain DSM 14266 / JCM 13030 / NBRC 101832 / S2 / LL).